A 161-amino-acid polypeptide reads, in one-letter code: Regulator of ribonuclease activity A (161 aa).

The protein belongs to the RraA family. In terms of assembly, homotrimer. Binds to both RNA-binding sites in the C-terminal region of Rne and to RhlB.

It is found in the cytoplasm. Its function is as follows. Globally modulates RNA abundance by binding to RNase E (Rne) and regulating its endonucleolytic activity. Can modulate Rne action in a substrate-dependent manner by altering the composition of the degradosome. Modulates RNA-binding and helicase activities of the degradosome. This chain is Regulator of ribonuclease activity A, found in Shewanella sediminis (strain HAW-EB3).